A 130-amino-acid chain; its full sequence is Small ribosomal subunit protein uS9 (130 aa).

The protein belongs to the universal ribosomal protein uS9 family.

This chain is Small ribosomal subunit protein uS9, found in Pectobacterium carotovorum subsp. carotovorum (strain PC1).